The following is a 101-amino-acid chain: Small integral membrane protein 14 (101 aa).

A compositionally biased stretch (basic and acidic residues) spans 71 to 81 (SDRRTADDAAI). The tract at residues 71 to 101 (SDRRTADDAAIEKPTGSSDDNTPPPPPPSAM) is disordered. The segment covering 92-101 (TPPPPPPSAM) has biased composition (pro residues).

This Caenorhabditis elegans protein is Small integral membrane protein 14.